A 145-amino-acid chain; its full sequence is uncharacterized protein (145 aa).

The substrate site is built by valine 97 and asparagine 121.

It belongs to the D-isomer specific 2-hydroxyacid dehydrogenase family. FDH subfamily.

This is an uncharacterized protein from Saccharomyces cerevisiae (strain ATCC 204508 / S288c) (Baker's yeast).